The primary structure comprises 799 residues: MAKSGSLSIRVVEGRALPAKDVSGSSDPYCLVKVDDQVVARTATIWRSLSPFWGEEYTVHLPLDFHHLAFYVLDEDTVGHDDIIGKISLSKEAITADPRGIDSWINLSRVDPDAEVQGEVCLDVKLLEDARGRCLRCHVRQARDLAPRDISGTSDPFARVFWGNHSLETSTIKKTRFPHWDEVLELREAPGTTSPLRVELWDWDMVGKNDFLGMVEFTPQTLQQKPPNGWFRLLPFPRAEDSGGSLGALRLKVRLTEDRVLPSQYYQPLMELLLESVQGPAEEDTTSPLALLEELASGDCRQDLATKLVKLFLGRGLAGPFLDYLTRREVARTNDPNTLFRSNSLASKSMEQFMKLVGMRYLHEVLRPVISRVFEEKKYMELDPCKMDLNRSRRISFKGTPTEEQVRETSLGLLTGYLGSVVDAIVSSTGRCPLALRLAFKQLQRCVEKRFSGIEHQDVKYLAISGFLFLRFFAPAILTPKLFDLRDQHADPQTSRSLLLLAKAVQSIGNLGQQLGQGKEQWLAPLHPFLLQSISRVRDFLDQLVDVDEDEEAGGPACALVQPSTIVREGFLLKRKEEPGGLATRFAFKKRYFRLSGRDLSYSKTPEWQVHTSIPLSCIRAVEHVDEGAFQLPHVMQVVTQDGAGTSHTTYLQCKNVNDLNQWLSALRKASAPNPGKLVACHPGAFRSGRWTCCLQAERSAAGCSRTHSAITLGDWSDPLDPDAEAQAVYRQLLLGRDQLRLKLLEDSSLDTEVDPGRDSSATDGPCAEVLAQQRAATTHLLQVLEDLEQAHEEFQKRG.

C2 domains are found at residues 1–105 (MAKS…DSWI) and 116–231 (VQGE…NGWF). Ca(2+) contacts are provided by aspartate 21, aspartate 27, aspartate 74, aspartate 76, aspartate 82, aspartate 149, aspartate 155, aspartate 202, aspartate 204, and aspartate 210. The Ras-GAP domain occupies 316-544 (GLAGPFLDYL…SRVRDFLDQL (229 aa)). Threonine 400 carries the post-translational modification Phosphothreonine. The PH domain occupies 565 to 672 (TIVREGFLLK…WLSALRKASA (108 aa)). Residues 674 to 710 (NPGKLVACHPGAFRSGRWTCCLQAERSAAGCSRTHSA) form a Btk-type zinc finger. Zn(2+) is bound by residues histidine 682, cysteine 693, cysteine 694, and cysteine 704.

It depends on Ca(2+) as a cofactor.

Probable inhibitory regulator of the Ras-cyclic AMP pathway. Plays a role in dendrite formation by melanocytes. The polypeptide is RasGAP-activating-like protein 1 (Mus musculus (Mouse)).